The sequence spans 769 residues: MGPNPGPKAQPAPIRGFGVKIDQYTNDVDLKDEANVKLWEAIGDHISLVTKFLAGGGPTDYGAGGKPLLFCGAEAGVHQPWDTSIVKDHEGKNVVTDRDPKTKMPTKYLNLGLAFMGVSRNPNANAFWMSKFDGYDLDYDDDTSLCAENPKDGRLRYAKVAKRPFIRYTKMRLPPLATAIPLAVVWASLASVINANKAANALLASISVSTVSGTAPGRPTELVSAQEAILAGDYTKRLHYQGRDVCPVGCSNAGIDTSSWFVYGSLNRLDRACDRPMLLDFALANPIDTQKSHVAISACTADYENFSSFVPSSDSATSCASKVAEQAEVTFPLLLKSSGASSSQHVADVTSALEQLQAFAILSNSGCNETIKYFYSGDVIVGVYAGSGLAGQGVLSTVLEKLSTRIKDDGSVAESWSVEMCSNSSARYSLSVLVNTKGKFGAVQRGLQASKNGTCFSTETEIAASDWETVTYLAASASSITSTANPNKLTSYRATACRTIQVVSGDSCASLATQCGITAAQFTKYNSDPSLCSGLTPGKHVCCSPGTLPDFTPKPSADGYCYSNLVKSGDSCASLAAANDLTNAKIESFNKMTWGWNGCEKPFAKYKICLSTGYPPMPATIPNAVCGPQVNDTVKAPPETDLSTLNECPLNACCNIWGQCGTTGDFCTPSNSSTGAPGTAAPGKNGCISNCGTNIVTSSAPGKTYNVSYHDLGGRPPRPPFGEYNSKDSRIPANFSCERVVQLAMEMGHSTIVQLLIDAGADTSLPHPL.

The helical transmembrane segment at 173 to 193 (LPPLATAIPLAVVWASLASVI) threads the bilayer. N305, N368, N423, and N452 each carry an N-linked (GlcNAc...) asparagine glycan. LysM domains follow at residues 498 to 543 (RTIQ…HVCC) and 562 to 610 (YSNL…KICL). N-linked (GlcNAc...) asparagine glycans are attached at residues N631, N671, N706, and N734.

This sequence belongs to the secreted LysM effector family.

The protein localises to the membrane. Non-secreted LysM effector that might be involved in manipulation of host defenses for successful infection. This Penicillium expansum (Blue mold rot fungus) protein is Non-secreted LysM effector LysM17.